Consider the following 180-residue polypeptide: Crossover junction endodeoxyribonuclease RuvC (180 aa).

Catalysis depends on residues aspartate 9, glutamate 74, and aspartate 146. Mg(2+) contacts are provided by aspartate 9, glutamate 74, and aspartate 146.

It belongs to the RuvC family. As to quaternary structure, homodimer which binds Holliday junction (HJ) DNA. The HJ becomes 2-fold symmetrical on binding to RuvC with unstacked arms; it has a different conformation from HJ DNA in complex with RuvA. In the full resolvosome a probable DNA-RuvA(4)-RuvB(12)-RuvC(2) complex forms which resolves the HJ. Mg(2+) is required as a cofactor.

The protein resides in the cytoplasm. The catalysed reaction is Endonucleolytic cleavage at a junction such as a reciprocal single-stranded crossover between two homologous DNA duplexes (Holliday junction).. The RuvA-RuvB-RuvC complex processes Holliday junction (HJ) DNA during genetic recombination and DNA repair. Endonuclease that resolves HJ intermediates. Cleaves cruciform DNA by making single-stranded nicks across the HJ at symmetrical positions within the homologous arms, yielding a 5'-phosphate and a 3'-hydroxyl group; requires a central core of homology in the junction. The consensus cleavage sequence is 5'-(A/T)TT(C/G)-3'. Cleavage occurs on the 3'-side of the TT dinucleotide at the point of strand exchange. HJ branch migration catalyzed by RuvA-RuvB allows RuvC to scan DNA until it finds its consensus sequence, where it cleaves and resolves the cruciform DNA. This is Crossover junction endodeoxyribonuclease RuvC from Methylobacillus flagellatus (strain ATCC 51484 / DSM 6875 / VKM B-1610 / KT).